A 124-amino-acid chain; its full sequence is Small ribosomal subunit protein uS12 (124 aa).

D90 bears the 3-methylthioaspartic acid mark.

This sequence belongs to the universal ribosomal protein uS12 family. In terms of assembly, part of the 30S ribosomal subunit. Contacts proteins S8 and S17. May interact with IF1 in the 30S initiation complex.

Functionally, with S4 and S5 plays an important role in translational accuracy. In terms of biological role, interacts with and stabilizes bases of the 16S rRNA that are involved in tRNA selection in the A site and with the mRNA backbone. Located at the interface of the 30S and 50S subunits, it traverses the body of the 30S subunit contacting proteins on the other side and probably holding the rRNA structure together. The combined cluster of proteins S8, S12 and S17 appears to hold together the shoulder and platform of the 30S subunit. In Wolbachia pipientis wMel, this protein is Small ribosomal subunit protein uS12.